A 230-amino-acid polypeptide reads, in one-letter code: Ribosomal RNA small subunit methyltransferase G (230 aa).

Residues G74, F79, 124-125 (AE), and R141 each bind S-adenosyl-L-methionine.

Belongs to the methyltransferase superfamily. RNA methyltransferase RsmG family.

Its subcellular location is the cytoplasm. Functionally, specifically methylates the N7 position of a guanine in 16S rRNA. In Acholeplasma laidlawii (strain PG-8A), this protein is Ribosomal RNA small subunit methyltransferase G.